A 209-amino-acid polypeptide reads, in one-letter code: Large ribosomal subunit protein uL3 (209 aa).

Residues 141-164 (RAVGSMGGSSDPSRTFKSKKMPGH) are disordered.

This sequence belongs to the universal ribosomal protein uL3 family. Part of the 50S ribosomal subunit. Forms a cluster with proteins L14 and L19.

In terms of biological role, one of the primary rRNA binding proteins, it binds directly near the 3'-end of the 23S rRNA, where it nucleates assembly of the 50S subunit. The chain is Large ribosomal subunit protein uL3 from Clostridium acetobutylicum (strain ATCC 824 / DSM 792 / JCM 1419 / IAM 19013 / LMG 5710 / NBRC 13948 / NRRL B-527 / VKM B-1787 / 2291 / W).